A 21-amino-acid polypeptide reads, in one-letter code: C-phycocyanin alpha subunit (21 aa).

It belongs to the phycobiliprotein family. In terms of assembly, heterodimer of an alpha and a beta subunit, which further assembles into trimers and the trimers into hexamers. Contains one covalently linked bilin chromophore.

It localises to the cellular thylakoid membrane. Light-harvesting photosynthetic bile pigment-protein from the phycobiliprotein complex (phycobilisome, PBS). Phycocyanin is the major phycobiliprotein in the PBS rod. The protein is C-phycocyanin alpha subunit of Anabaena sp. (strain L31).